The following is a 1120-amino-acid chain: Transcription-repair-coupling factor (1120 aa).

Residues 591 to 756 form the Helicase ATP-binding domain; it reads DLTNGMLMDR…LTGLKELSII (166 aa). 604 to 611 is a binding site for ATP; sequence GDVGFGKT. A DEEQ box motif is present at residues 709-712; the sequence is DEEQ. Residues 777-933 form the Helicase C-terminal domain; that stretch reads IIRDALLREH…TIASHDADLR (157 aa).

The protein in the N-terminal section; belongs to the UvrB family. It in the C-terminal section; belongs to the helicase family. RecG subfamily.

It is found in the cytoplasm. Its function is as follows. Couples transcription and DNA repair by recognizing RNA polymerase (RNAP) stalled at DNA lesions. Mediates ATP-dependent release of RNAP and its truncated transcript from the DNA, and recruitment of nucleotide excision repair machinery to the damaged site. This chain is Transcription-repair-coupling factor, found in Rickettsia typhi (strain ATCC VR-144 / Wilmington).